A 275-amino-acid chain; its full sequence is Ribosomal RNA small subunit methyltransferase A (275 aa).

The S-adenosyl-L-methionine site is built by N28, L30, G55, E77, D103, and N123.

It belongs to the class I-like SAM-binding methyltransferase superfamily. rRNA adenine N(6)-methyltransferase family. RsmA subfamily.

The protein resides in the cytoplasm. It catalyses the reaction adenosine(1518)/adenosine(1519) in 16S rRNA + 4 S-adenosyl-L-methionine = N(6)-dimethyladenosine(1518)/N(6)-dimethyladenosine(1519) in 16S rRNA + 4 S-adenosyl-L-homocysteine + 4 H(+). In terms of biological role, specifically dimethylates two adjacent adenosines (A1518 and A1519) in the loop of a conserved hairpin near the 3'-end of 16S rRNA in the 30S particle. May play a critical role in biogenesis of 30S subunits. The protein is Ribosomal RNA small subunit methyltransferase A of Allorhizobium ampelinum (strain ATCC BAA-846 / DSM 112012 / S4) (Agrobacterium vitis (strain S4)).